We begin with the raw amino-acid sequence, 254 residues long: Triosephosphate isomerase (254 aa).

Residue 12–14 (NWK) coordinates substrate. The Electrophile role is filled by H99. The active-site Proton acceptor is the E169. Substrate-binding positions include G175, S214, and 235-236 (GG).

It belongs to the triosephosphate isomerase family. As to quaternary structure, homodimer.

Its subcellular location is the cytoplasm. The enzyme catalyses D-glyceraldehyde 3-phosphate = dihydroxyacetone phosphate. Its pathway is carbohydrate biosynthesis; gluconeogenesis. It participates in carbohydrate degradation; glycolysis; D-glyceraldehyde 3-phosphate from glycerone phosphate: step 1/1. Involved in the gluconeogenesis. Catalyzes stereospecifically the conversion of dihydroxyacetone phosphate (DHAP) to D-glyceraldehyde-3-phosphate (G3P). The sequence is that of Triosephosphate isomerase from Bartonella bacilliformis (strain ATCC 35685 / KC583 / Herrer 020/F12,63).